Reading from the N-terminus, the 227-residue chain is Ubiquitin carboxyl-terminal hydrolase (227 aa).

One can recognise a UCH catalytic domain in the interval 3-224 (TWTPLESNPE…VRFTVLALTA (222 aa)). Residue Cys-93 is the Nucleophile of the active site. His-164 acts as the Proton donor in catalysis.

Belongs to the peptidase C12 family.

It catalyses the reaction Thiol-dependent hydrolysis of ester, thioester, amide, peptide and isopeptide bonds formed by the C-terminal Gly of ubiquitin (a 76-residue protein attached to proteins as an intracellular targeting signal).. In terms of biological role, ubiquitin-protein hydrolase is involved both in the processing of ubiquitin precursors and of ubiquitinated proteins. This enzyme is a thiol protease that recognizes and hydrolyzes a peptide bond at the C-terminal glycine of ubiquitin. This is Ubiquitin carboxyl-terminal hydrolase (Uch) from Drosophila melanogaster (Fruit fly).